We begin with the raw amino-acid sequence, 274 residues long: Penicillin-insensitive murein endopeptidase (274 aa).

Residues 1 to 19 (MKKTALALLALLVSSASLA) form the signal peptide. 3 disulfides stabilise this stretch: C44/C265, C187/C235, and C216/C223. The Zn(2+) site is built by H110, H113, D120, D147, H150, and H211. Positions 225–274 (DQPLPPPGDGCGAELQSWFEPPEPGTTKPEKKTPPPLPPSCQALLDEHVL) are disordered.

The protein belongs to the peptidase M74 family. Dimer. Zn(2+) is required as a cofactor.

It localises to the periplasm. Its function is as follows. Murein endopeptidase that cleaves the D-alanyl-meso-2,6-diamino-pimelyl amide bond that connects peptidoglycan strands. Likely plays a role in the removal of murein from the sacculus. In Citrobacter koseri (strain ATCC BAA-895 / CDC 4225-83 / SGSC4696), this protein is Penicillin-insensitive murein endopeptidase.